Here is a 243-residue protein sequence, read N- to C-terminus: Small ribosomal subunit protein uS5 (243 aa).

2 stretches are compositionally biased toward basic and acidic residues: residues methionine 1–lysine 21 and leucine 34–glycine 46. Residues methionine 1–proline 85 form a disordered region. An S5 DRBM domain is found at phenylalanine 89 to valine 152.

Belongs to the universal ribosomal protein uS5 family. As to quaternary structure, part of the 30S ribosomal subunit. Contacts proteins S4 and S8.

In terms of biological role, with S4 and S12 plays an important role in translational accuracy. Located at the back of the 30S subunit body where it stabilizes the conformation of the head with respect to the body. This chain is Small ribosomal subunit protein uS5, found in Mycoplasma mobile (strain ATCC 43663 / 163K / NCTC 11711) (Mesomycoplasma mobile).